Here is a 360-residue protein sequence, read N- to C-terminus: Ferredoxin--NADP reductase, leaf isozyme 1, chloroplastic (360 aa).

The N-terminal 49 residues, 1–49 (MAAAISAAVSLPSSKSSSLLTKISSVSPQRIFLKKSTVCYRRVVSVKAQ), are a transit peptide targeting the chloroplast. Residues 81 to 203 (KNPYTGRCLL…TGPVGKEMLM (123 aa)) enclose the FAD-binding FR-type domain. Residues 139–142 (RLYS), 160–162 (CVK), Tyr-166, and 177–179 (VCS) each bind FAD. NADP(+) is bound by residues Ser-142 and Lys-162. Residues Cys-178 and Cys-183 are joined by a disulfide bond. At Ser-179 the chain carries Phosphoserine. Thr-210 carries the phosphothreonine modification. Thr-218 is a binding site for FAD. NADP(+)-binding positions include Thr-218, 250–251 (VP), 280–281 (SR), Lys-290, 319–320 (GL), and Glu-358.

This sequence belongs to the ferredoxin--NADP reductase type 1 family. In terms of assembly, heterodimer with LFNR2. Interacts with PGRL1A and PGRL1B. Interacts with TIC62. Component of high molecular weight thylakoid LFNRs-containing protein complexes containing LIR1, LFNR1, LFNR2, TIC62 and TROL proteins. Interacts directly with LIR1 and TIC62; LIR1 increases the affinity of LFNR1 and LFNR2 for TIC62. Binds to YCF54 in chloroplasts. FAD serves as cofactor. May form interchain disulfide bonds with LIR1. Expressed in shoots. Restricted to green tissues, being more abundant in siliques.

Its subcellular location is the plastid. It is found in the chloroplast stroma. The protein resides in the chloroplast thylakoid membrane. The catalysed reaction is 2 reduced [2Fe-2S]-[ferredoxin] + NADP(+) + H(+) = 2 oxidized [2Fe-2S]-[ferredoxin] + NADPH. It functions in the pathway energy metabolism; photosynthesis. Plays a key role in regulating the relative amounts of cyclic and non-cyclic electron flow to meet the demands of the plant for ATP and reducing power. Probable electron donor required for the MgProto monomethylester (MgProtoME) cyclase complex reaction to form protochlorophyllide, thus connecting chlorophyll synthesis with photosynthetic activity. This chain is Ferredoxin--NADP reductase, leaf isozyme 1, chloroplastic, found in Arabidopsis thaliana (Mouse-ear cress).